The chain runs to 418 residues: MRESQDAAGAHGWNRVGSTATKWFTGAPFGVQSHRFDISAVYPNWKKFSTFTEAPYSTRYSTQVSHIGPGTYSSKETCFSKKKLMKEVDTGWAKAQEATRLTQLPHFQYQAIMKEKRLKEQKLGPGSYNLKDFLEQLREKPCSTRGLLSSGEVRFRGLTGNYYPGPGNYGEKGNPYTKLEENAWNRSHSEGLMCRMSNKPHPRPHQGSGLGPGTYFFKSDLETYVARSVGTRGPYDTFSGDRSKPLPYGHYSMQKKKPRELMNFKSFVEELNSHHNKKHGVFSKLPRNPKTPTERIYWANLSQCPRTLATSGPSFWLPQEKKCKPVNQPPFLLTSKGSGAKACQMIMGSWNPVGVGRYLNTWLMETKDRRQRYRSLFLSGSKRYLSDLARDMLMQERITPFTKGKCPPTVDYNSDPTP.

In terms of tissue distribution, sperm.

The sequence is that of Ciliary microtubule-associated protein 2 from Homo sapiens (Human).